The primary structure comprises 194 residues: Translation machinery-associated protein 22 (194 aa).

Residues 102–173 (VQIKRVERNK…DVQEWLLEVY (72 aa)) form the SUI1 domain.

This sequence belongs to the DENR family. As to quaternary structure, interacts with the 40S ribosomal subunit.

It is found in the cytoplasm. The protein is Translation machinery-associated protein 22 (tma22) of Aspergillus clavatus (strain ATCC 1007 / CBS 513.65 / DSM 816 / NCTC 3887 / NRRL 1 / QM 1276 / 107).